The following is a 440-amino-acid chain: NADH-quinone oxidoreductase subunit H (440 aa).

9 helical membrane passes run 11–31 (VWLI…WTIF), 83–103 (IVFN…WSVI), 123–143 (VPVA…GVVL), 164–184 (MISY…FSGS), 207–227 (IAGH…ITMF), 261–281 (FLAE…LFLG), 299–319 (WWGL…FVWV), 331–351 (FMDL…LLVA), and 366–386 (VFLV…FMGG).

Belongs to the complex I subunit 1 family. As to quaternary structure, NDH-1 is composed of 14 different subunits. Subunits NuoA, H, J, K, L, M, N constitute the membrane sector of the complex.

It localises to the cell membrane. The enzyme catalyses a quinone + NADH + 5 H(+)(in) = a quinol + NAD(+) + 4 H(+)(out). In terms of biological role, NDH-1 shuttles electrons from NADH, via FMN and iron-sulfur (Fe-S) centers, to quinones in the respiratory chain. The immediate electron acceptor for the enzyme in this species is believed to be ubiquinone. Couples the redox reaction to proton translocation (for every two electrons transferred, four hydrogen ions are translocated across the cytoplasmic membrane), and thus conserves the redox energy in a proton gradient. This subunit may bind ubiquinone. This Cutibacterium acnes (strain DSM 16379 / KPA171202) (Propionibacterium acnes) protein is NADH-quinone oxidoreductase subunit H.